Consider the following 755-residue polypeptide: Primary amine oxidase (755 aa).

The N-terminal stretch at 1–30 (MANGLKFSPRKTALALAVAVVCAWQSPVFA) is a signal peptide. Residues 411–422 (YLDSGDYGMGTL) and 493–498 (VGNYDY) contribute to the substrate site. D413 (proton acceptor) is an active-site residue. The active-site Schiff-base intermediate with substrate; via topaquinone is Y496. Y496 carries the 2',4',5'-topaquinone modification. Cu cation contacts are provided by H554 and H556. D563, L564, D565, E603, Y697, D700, E702, and D708 together coordinate Ca(2+). Residue D563 participates in Mn(2+) binding. Residue D565 participates in Mn(2+) binding. A Mn(2+)-binding site is contributed by D708. Cu cation is bound at residue H719.

It belongs to the copper/topaquinone oxidase family. As to quaternary structure, homodimer. Cu cation is required as a cofactor. The cofactor is Zn(2+). It depends on Ca(2+) as a cofactor. Requires L-topaquinone as cofactor. Mn(2+) serves as cofactor. Post-translationally, topaquinone (TPQ) is generated by copper-dependent autoxidation of a specific tyrosyl residue.

The protein resides in the periplasm. The catalysed reaction is a primary methyl amine + O2 + H2O = an aldehyde + H2O2 + NH4(+). Its function is as follows. Active on tyramine, tryptamine, beta-phenethylamine and dopamine. In Klebsiella aerogenes (Enterobacter aerogenes), this protein is Primary amine oxidase (maoA).